We begin with the raw amino-acid sequence, 156 residues long: Calglandulin (156 aa).

4 consecutive EF-hand domains span residues 8-43, 44-79, 82-117, and 118-153; these read EQITEYKGIFEMFDEEGNGLVKTDDLESLMSLIGIN, PTKRDLANMAKDVDKDKKGTFNCDGFLVLMGIYHEK, NQDEELRAAFKVFDKEHKGYIEWDTLKYVLMNAGEP, and LNEHEAELMMKEADKDGDGTIDYEEFVAMMTGESFK. The Ca(2+) site is built by aspartate 131, aspartate 133, aspartate 135, threonine 137, and glutamate 142.

The protein belongs to the calmodulin family. Calglandulin subfamily. In terms of tissue distribution, expressed by the venom gland.

The protein resides in the cytoplasm. In terms of biological role, may be involved in the cellular control mechanism of the secretion of toxins from the gland into the venom. The polypeptide is Calglandulin (Hoplocephalus stephensii (Stephens's banded snake)).